Here is a 208-residue protein sequence, read N- to C-terminus: A-type ATP synthase subunit E (208 aa).

A disordered region spans residues 37–57 (DAEKTAEAEKNKILDNGKKQS).

It belongs to the V-ATPase E subunit family. As to quaternary structure, has multiple subunits with at least A(3), B(3), C, D, E, F, H, I and proteolipid K(x).

The protein resides in the cell membrane. Functionally, component of the A-type ATP synthase that produces ATP from ADP in the presence of a proton gradient across the membrane. The chain is A-type ATP synthase subunit E from Methanobrevibacter smithii (strain ATCC 35061 / DSM 861 / OCM 144 / PS).